Here is a 391-residue protein sequence, read N- to C-terminus: NADH-quinone oxidoreductase subunit D (391 aa).

It belongs to the complex I 49 kDa subunit family. In terms of assembly, NDH-1 is composed of 14 different subunits. Subunits NuoB, C, D, E, F, and G constitute the peripheral sector of the complex.

The protein localises to the cell inner membrane. The catalysed reaction is a quinone + NADH + 5 H(+)(in) = a quinol + NAD(+) + 4 H(+)(out). NDH-1 shuttles electrons from NADH, via FMN and iron-sulfur (Fe-S) centers, to quinones in the respiratory chain. The immediate electron acceptor for the enzyme in this species is believed to be ubiquinone. Couples the redox reaction to proton translocation (for every two electrons transferred, four hydrogen ions are translocated across the cytoplasmic membrane), and thus conserves the redox energy in a proton gradient. The protein is NADH-quinone oxidoreductase subunit D of Rickettsia bellii (strain OSU 85-389).